Here is a 23-residue protein sequence, read N- to C-terminus: Coenzyme PQQ synthesis protein A (23 aa).

A cross-link (pyrroloquinoline quinone (Glu-Tyr)) is located at residues 15–19 (EVTLY).

The protein belongs to the PqqA family.

It participates in cofactor biosynthesis; pyrroloquinoline quinone biosynthesis. In terms of biological role, required for coenzyme pyrroloquinoline quinone (PQQ) biosynthesis. PQQ is probably formed by cross-linking a specific glutamate to a specific tyrosine residue and excising these residues from the peptide. The sequence is that of Coenzyme PQQ synthesis protein A from Colwellia psychrerythraea (strain 34H / ATCC BAA-681) (Vibrio psychroerythus).